Consider the following 436-residue polypeptide: Voltage-gated purine nucleotide uniporter SLC17A9 (436 aa).

Helical transmembrane passes span 64 to 84 (IVLS…GHLG), 92 to 112 (VILL…LLAH), 118 to 138 (LAFM…YFPA), 158 to 178 (IVGA…SLLL), 181 to 201 (YGWQ…VWYV), 239 to 259 (PAVW…FILL), 276 to 296 (WIFN…SGFL), 316 to 336 (GMGL…SSFC), 369 to 389 (GFLF…GVCL), and 402 to 422 (CLFN…LVFG).

Belongs to the major facilitator superfamily. Sodium/anion cotransporter family. Widely expressed, but more predominantly in adrenal gland, brain and thyroid.

The protein resides in the cytoplasmic vesicle. It localises to the secretory vesicle. Its subcellular location is the chromaffin granule membrane. The protein localises to the secretory vesicle membrane. It is found in the lysosome membrane. It carries out the reaction ATP(in) = ATP(out). The enzyme catalyses ADP(in) = ADP(out). It catalyses the reaction GTP(in) = GTP(out). Activity is chloride-dependent. Inhibited by AMP-PNP, gammaS-ATP, diadenosine triphosphate, 4,4'- diisothiocyanatostilbene-2,2'-disulfonate (DIDS) and Evans blue. Functionally, voltage-gated ATP nucleotide uniporter that can also transport the purine nucleotides ADP and GTP. Uses the membrane potential as the driving force to control ATP accumulation in lysosomes and secretory vesicles. By controlling ATP storage in lysosomes, regulates ATP-dependent proteins of these organelles. Also indirectly regulates the exocytosis of ATP through its import into lysosomes in astrocytes and secretory vesicles such as adrenal chromaffin granules, mucin granules and synaptic vesicles. The polypeptide is Voltage-gated purine nucleotide uniporter SLC17A9 (Homo sapiens (Human)).